The primary structure comprises 446 residues: Ribosomal protein uS12 methylthiotransferase RimO (446 aa).

One can recognise an MTTase N-terminal domain in the interval 4-119; it reads YKVGMVSLGC…IDKVIKEFIE (116 aa). The [4Fe-4S] cluster site is built by Cys13, Cys48, Cys82, Cys157, Cys161, and Cys164. The Radical SAM core domain maps to 143–373; the sequence is TTQKESAYIR…MLSQEKISND (231 aa). The 67-residue stretch at 376 to 442 folds into the TRAM domain; it reads KLKVNKKYDI…DYDLIGVVED (67 aa).

It belongs to the methylthiotransferase family. RimO subfamily. [4Fe-4S] cluster serves as cofactor.

It localises to the cytoplasm. The catalysed reaction is L-aspartate(89)-[ribosomal protein uS12]-hydrogen + (sulfur carrier)-SH + AH2 + 2 S-adenosyl-L-methionine = 3-methylsulfanyl-L-aspartate(89)-[ribosomal protein uS12]-hydrogen + (sulfur carrier)-H + 5'-deoxyadenosine + L-methionine + A + S-adenosyl-L-homocysteine + 2 H(+). In terms of biological role, catalyzes the methylthiolation of an aspartic acid residue of ribosomal protein uS12. In Clostridium botulinum (strain Eklund 17B / Type B), this protein is Ribosomal protein uS12 methylthiotransferase RimO.